We begin with the raw amino-acid sequence, 379 residues long: MHCAYFERGTCRSCGWLADPYADQLQRKMARCQSALTGLGGVWLPIVPSAETAFRNKAKMVVCGDASSPCLGILDADDDGIDLSNCPLYPTAITEAFEPLKQMIRRLGIPPYDVKKRQGELKYLLITVSEDDDSLMVRLVLRSDIWIERLRADLSTLTADLPHLAVLSVNIQPVHQAILEGEQEVILTDRETLTVHLNGLPFHLRPKSFFQTNTRVAEQLYATARSWVAEVAPVHMWDLFCGVGGFALHCADVIPGQVTGIEISAEAIASAQQSALELGLKNVSFHALGANEFIDQAVSLPQMPALVVVNPPRRGLGVGLCAFLDESVVQTVIYSSCNPESLARDLVMMPGFELVKAQVFDLFPHTAHSEVLAMLVRVR.

Residues cysteine 3, cysteine 11, cysteine 14, and cysteine 86 each contribute to the [4Fe-4S] cluster site. S-adenosyl-L-methionine-binding residues include glutamine 211, phenylalanine 240, glutamate 262, and asparagine 310. The active-site Nucleophile is cysteine 337.

This sequence belongs to the class I-like SAM-binding methyltransferase superfamily. RNA M5U methyltransferase family. RlmC subfamily.

It catalyses the reaction uridine(747) in 23S rRNA + S-adenosyl-L-methionine = 5-methyluridine(747) in 23S rRNA + S-adenosyl-L-homocysteine + H(+). In terms of biological role, catalyzes the formation of 5-methyl-uridine at position 747 (m5U747) in 23S rRNA. In Halothiobacillus neapolitanus (strain ATCC 23641 / c2) (Thiobacillus neapolitanus), this protein is 23S rRNA (uracil(747)-C(5))-methyltransferase RlmC.